Reading from the N-terminus, the 1080-residue chain is Adenylate cyclase type 7 (1080 aa).

Topologically, residues methionine 1–proline 33 are cytoplasmic. The next 6 helical transmembrane spans lie at leucine 34–phenylalanine 54, glutamine 63–methionine 83, alanine 95–threonine 117, alanine 122–phenylalanine 142, alanine 147–glycine 167, and valine 176–phenylalanine 196. Residues histidine 197–arginine 594 are Cytoplasmic-facing. One can recognise a Guanylate cyclase 1 domain in the interval serine 279 to glutamate 406. Mg(2+)-binding residues include aspartate 284, isoleucine 285, and aspartate 328. ATP is bound by residues aspartate 284–threonine 289, leucine 326–aspartate 328, and arginine 372. The tract at residues aspartate 454–alanine 474 is disordered. The interval lysine 477–valine 482 is mediates regulation of adenylate cyclase activity by C5 alpha-induced G- beta and gamma pathway. The mediates regulation of adenylate cyclase activity by sphingosine 1-phosphate-induced G alpha 13 pathway stretch occupies residues tryptophan 491–histidine 499. The interval glutamate 504–aspartate 546 is disordered. The modulates adenylate cyclase activity by modulating the binding of G(s)alpha to the high-affinity G(s)alpha binding site in 7C1a/7C2 stretch occupies residues valine 506 to glutamate 584. The span at asparagine 515–threonine 529 shows a compositional bias: basic residues. A run of 3 helical transmembrane segments spans residues histidine 595–methionine 615, alanine 620–phenylalanine 640, and leucine 669–proline 688. Asparagine 701 carries N-linked (GlcNAc...) asparagine glycosylation. Transmembrane regions (helical) follow at residues proline 718–leucine 737 and valine 746–glycine 773. Asparagine 776 and asparagine 781 each carry an N-linked (GlcNAc...) asparagine glycan. The helical transmembrane segment at aspartate 794–serine 814 threads the bilayer. The Cytoplasmic portion of the chain corresponds to arginine 815–asparagine 1080. The region spanning cysteine 879–glutamate 1023 is the Guanylate cyclase 2 domain. ATP contacts are provided by residues lysine 931, aspartate 1010–tryptophan 1012, asparagine 1017–arginine 1021, and lysine 1057.

It belongs to the adenylyl cyclase class-4/guanylyl cyclase family. Requires Mg(2+) as cofactor. Mn(2+) is required as a cofactor. Phosphorylated by PRKCD.

Its subcellular location is the membrane. It catalyses the reaction ATP = 3',5'-cyclic AMP + diphosphate. With respect to regulation, activated by the G protein alpha subunit. Activated by the G protein beta and gamma subunit complex. Activated by GNA13 and GNA12. Ethanol and phorbol 12,13-dibutanoate significantly potentiate adenylate cyclase activity generated in response to the activation of the prostanoid receptor by the agonist prostaglandin E1(1-) in a PKC-dependent manner. Inhibited by lithium. Functionally, catalyzes the formation of cAMP in response to activation of G protein-coupled receptors. Functions in signaling cascades activated namely by thrombin and sphingosine 1-phosphate and mediates regulation of cAMP synthesis through synergistic action of the stimulatory G alpha protein with GNA13. Also, during inflammation, mediates zymosan-induced increase intracellular cAMP, leading to protein kinase A pathway activation in order to modulate innate immune responses through heterotrimeric G proteins G(12/13). Functions in signaling cascades activated namely by dopamine and C5 alpha chain and mediates regulation of cAMP synthesis through synergistic action of the stimulatory G protein with G beta:gamma complex. Functions, through cAMP response regulation, to keep inflammation under control during bacterial infection by sensing the presence of serum factors, such as the bioactive lysophospholipid (LPA) that regulate LPS-induced TNF-alpha production. However, it is also required for the optimal functions of B and T cells during adaptive immune responses by regulating cAMP synthesis in both B and T cells. The protein is Adenylate cyclase type 7 of Homo sapiens (Human).